Reading from the N-terminus, the 74-residue chain is Large ribosomal subunit protein bL28 (74 aa).

Belongs to the bacterial ribosomal protein bL28 family.

The sequence is that of Large ribosomal subunit protein bL28 from Desulforapulum autotrophicum (strain ATCC 43914 / DSM 3382 / VKM B-1955 / HRM2) (Desulfobacterium autotrophicum).